The primary structure comprises 242 residues: ATP synthase subunit b (242 aa).

2 consecutive transmembrane segments (helical) span residues 8–28 (VLPF…ASAP) and 87–107 (LMDL…LIKF).

It belongs to the ATPase B chain family. In terms of assembly, F-type ATPases have 2 components, F(1) - the catalytic core - and F(0) - the membrane proton channel. F(1) has five subunits: alpha(3), beta(3), gamma(1), delta(1), epsilon(1). F(0) has three main subunits: a(1), b(2) and c(10-14). The alpha and beta chains form an alternating ring which encloses part of the gamma chain. F(1) is attached to F(0) by a central stalk formed by the gamma and epsilon chains, while a peripheral stalk is formed by the delta and b chains.

The protein localises to the cell inner membrane. Functionally, f(1)F(0) ATP synthase produces ATP from ADP in the presence of a proton or sodium gradient. F-type ATPases consist of two structural domains, F(1) containing the extramembraneous catalytic core and F(0) containing the membrane proton channel, linked together by a central stalk and a peripheral stalk. During catalysis, ATP synthesis in the catalytic domain of F(1) is coupled via a rotary mechanism of the central stalk subunits to proton translocation. Component of the F(0) channel, it forms part of the peripheral stalk, linking F(1) to F(0). The polypeptide is ATP synthase subunit b (Desulfotalea psychrophila (strain LSv54 / DSM 12343)).